Reading from the N-terminus, the 30-residue chain is KEGYIVNYHTGCKYTCAKLGDNDYCLRECK.

The 30-residue stretch at 1 to 30 folds into the LCN-type CS-alpha/beta domain; it reads KEGYIVNYHTGCKYTCAKLGDNDYCLRECK.

It belongs to the long (4 C-C) scorpion toxin superfamily. Sodium channel inhibitor family. Beta subfamily. In terms of tissue distribution, expressed by the venom gland.

Its subcellular location is the secreted. Its function is as follows. Binds to sodium channels (Nav) and inhibits the inactivation of the activated channels, thereby blocking neuronal transmission. This is Neurotoxin II.22.5 from Centruroides tecomanus (Scorpion).